We begin with the raw amino-acid sequence, 134 residues long: Thyrotropin subunit beta (134 aa).

Positions 1 to 16 (MSPFFMMSLLFGLTFG) are cleaved as a signal peptide. Disulfide bonds link cysteine 22–cysteine 72, cysteine 36–cysteine 87, cysteine 39–cysteine 125, cysteine 47–cysteine 103, cysteine 51–cysteine 105, and cysteine 108–cysteine 115. Residue asparagine 43 is glycosylated (N-linked (GlcNAc...) asparagine).

The protein belongs to the glycoprotein hormones subunit beta family. In terms of assembly, heterodimer of a common alpha chain and a unique beta chain which confers biological specificity to thyrotropin, lutropin, follitropin and gonadotropin.

Its subcellular location is the secreted. Its function is as follows. Indispensable for the control of thyroid structure and metabolism. The polypeptide is Thyrotropin subunit beta (TSHB) (Gallus gallus (Chicken)).